A 726-amino-acid polypeptide reads, in one-letter code: ATP-dependent permease MDL1, mitochondrial (726 aa).

The N-terminal 112 residues, 1–112, are a transit peptide targeting the mitochondrion; that stretch reads MDPIRFGLSR…LAFLKLCVRH (112 aa). Residues Asn-66, Asn-113, and Asn-132 are each glycosylated (N-linked (GlcNAc...) asparagine). Transmembrane regions (helical) follow at residues 158–178, 196–216, 306–326, 386–406, and 423–443; these read FFIA…IPYI, IMGI…FLGS, GYMS…GEYV, GIFF…ILAL, and SFLL…GCFT. The region spanning 158 to 447 is the ABC transmembrane type-1 domain; it reads FFIAGSLLLV…LSGCFTDIMK (290 aa). Positions 482–719 constitute an ABC transporter domain; that stretch reads LSFRNVGFAY…GTNFYKLMRW (238 aa). Asn-502 carries N-linked (GlcNAc...) asparagine glycosylation. 517–524 is a binding site for ATP; sequence APSGGGKS. Asn-584, Asn-598, and Asn-668 each carry an N-linked (GlcNAc...) asparagine glycan.

The protein belongs to the ABC transporter superfamily. ABCB family. Mitochondrial peptide exporter (TC 3.A.1.212) subfamily.

The protein localises to the mitochondrion inner membrane. In terms of biological role, mediates export of peptides generated upon proteolysis of mitochondrial inner membrane proteins. In Schizosaccharomyces pombe (strain 972 / ATCC 24843) (Fission yeast), this protein is ATP-dependent permease MDL1, mitochondrial (mdl1).